The sequence spans 201 residues: Myosin regulatory light chain 2 (201 aa).

The segment at 1–48 (MADKDKKVKKKKAKEDAPAEEAPAAAAPAGDRQSSRGSRKAKRTGSNV) is disordered. A compositionally biased stretch (low complexity) spans 20-29 (EEAPAAAAPA). Ser-46 bears the Phosphoserine mark. EF-hand domains follow at residues 55–90 (KQVA…LGRL), 125–158 (DEDD…WGDK), and 159–194 (FSAD…SAEE). The Ca(2+) site is built by Asp-68, Asp-70, Asp-72, and Asp-79.

In terms of assembly, myosin is a hexamer of 2 heavy chains and 4 light chains.

In Bombyx mori (Silk moth), this protein is Myosin regulatory light chain 2.